Reading from the N-terminus, the 293-residue chain is 1D-myo-inositol 2-acetamido-2-deoxy-alpha-D-glucopyranoside deacetylase (293 aa).

Zn(2+) is bound by residues H16, D19, and H156.

The protein belongs to the MshB deacetylase family. It depends on Zn(2+) as a cofactor.

The catalysed reaction is 1D-myo-inositol 2-acetamido-2-deoxy-alpha-D-glucopyranoside + H2O = 1D-myo-inositol 2-amino-2-deoxy-alpha-D-glucopyranoside + acetate. Its function is as follows. Catalyzes the deacetylation of 1D-myo-inositol 2-acetamido-2-deoxy-alpha-D-glucopyranoside (GlcNAc-Ins) in the mycothiol biosynthesis pathway. The protein is 1D-myo-inositol 2-acetamido-2-deoxy-alpha-D-glucopyranoside deacetylase of Nakamurella multipartita (strain ATCC 700099 / DSM 44233 / CIP 104796 / JCM 9543 / NBRC 105858 / Y-104) (Microsphaera multipartita).